Reading from the N-terminus, the 274-residue chain is tRNA-cytidine(32) 2-sulfurtransferase (274 aa).

The PP-loop motif signature appears at Ser-40–Ser-45. [4Fe-4S] cluster-binding residues include Cys-115, Cys-118, and Cys-206.

This sequence belongs to the TtcA family. As to quaternary structure, homodimer. It depends on Mg(2+) as a cofactor. [4Fe-4S] cluster is required as a cofactor.

Its subcellular location is the cytoplasm. The catalysed reaction is cytidine(32) in tRNA + S-sulfanyl-L-cysteinyl-[cysteine desulfurase] + AH2 + ATP = 2-thiocytidine(32) in tRNA + L-cysteinyl-[cysteine desulfurase] + A + AMP + diphosphate + H(+). It participates in tRNA modification. Catalyzes the ATP-dependent 2-thiolation of cytidine in position 32 of tRNA, to form 2-thiocytidine (s(2)C32). The sulfur atoms are provided by the cysteine/cysteine desulfurase (IscS) system. In Pseudomonas aeruginosa (strain LESB58), this protein is tRNA-cytidine(32) 2-sulfurtransferase.